Reading from the N-terminus, the 309-residue chain is Cytochrome c biogenesis protein CcsA (309 aa).

8 helical membrane-spanning segments follow: residues 18–38 (LGLL…GAFF), 43–63 (FFIV…QLLF), 67–87 (ISGH…TWGI), 102–122 (IIPS…CFVL), 148–168 (VMLS…VLFI), 216–236 (SILI…VWAN), 250–267 (TWAF…HMRI), and 279–299 (LATT…FLGI).

The protein belongs to the CcmF/CycK/Ccl1/NrfE/CcsA family. May interact with ccs1.

It localises to the cellular thylakoid membrane. Its function is as follows. Required during biogenesis of c-type cytochromes (cytochrome c6 and cytochrome f) at the step of heme attachment. This is Cytochrome c biogenesis protein CcsA from Prochlorococcus marinus (strain MIT 9215).